The primary structure comprises 2197 residues: Protein sickie (2197 aa).

The 109-residue stretch at 21–129 (RDYAEIYTDW…LFFALSRFKQ (109 aa)) folds into the Calponin-homology (CH) domain. Disordered stretches follow at residues 165 to 197 (GLRT…QLAQ), 235 to 311 (CPPD…PQKH), 331 to 646 (AASV…NKFH), 730 to 767 (GSSP…SPGK), 788 to 910 (RNSR…FGYV), 1094 to 1119 (GPGQ…NRSN), and 1202 to 1223 (TAAG…GLVG). Residues 175–197 (QDKNQQEQQQQQQQQQTPQQLAQ) show a composition bias toward low complexity. A compositionally biased stretch (polar residues) spans 261 to 290 (SDFNTSRPNSPPTSNHTIQSLKSGNNNSLR). Positions 291–304 (PPSIKSGIPSPSSP) are enriched in low complexity. The span at 331–341 (AASVASKTQIQ) shows a compositional bias: polar residues. Low complexity-rich tracts occupy residues 342 to 354 (SKRT…FSSA) and 379 to 398 (SVSS…LAAQ). The segment covering 399–428 (QKKEQANKATKLDKKEKSPARSLNKEESGN) has biased composition (basic and acidic residues). Polar residues-rich tracts occupy residues 429-441 (ESRS…TGKS), 561-570 (ANSQPTSHIS), 577-588 (EPSTPQHSSGIY), and 633-644 (SAPNTPTASPNK). Composition is skewed to low complexity over residues 755–766 (GPSSSAGGISPG), 796–831 (SIGT…NNNN), and 887–904 (SSSK…KGVP). Polar residues predominate over residues 1100–1119 (GQMSGNESPYVQSPRMNRSN). A coiled-coil region spans residues 1262–1342 (YGNAEERQAH…RQTIELLRKQ (81 aa)). Disordered stretches follow at residues 1373–1415 (QALG…SMCS) and 1455–1511 (KTSR…SPAK). 2 stretches are compositionally biased toward polar residues: residues 1379 to 1399 (GSDQ…NNGS) and 1406 to 1415 (RQHSTDSMCS). Over residues 1455-1468 (KTSRHVGHHHHHNH) the composition is skewed to basic residues. Residues 1556-1591 (SSASQLESLKEMMNKMRAEMMSLKHNNERLQKLVTT) are a coiled coil. Disordered regions lie at residues 1600–1633 (SLGQ…PPME), 1648–1690 (CLPP…EAAP), and 2172–2197 (SEAQ…AGAE). Residues 1603–1616 (QAISPNGSVAGSSE) are compositionally biased toward polar residues. The segment covering 1650 to 1663 (PPAPAPEQPPPPAP) has biased composition (pro residues). Positions 2184-2197 (LDSNVTPESSAGAE) are enriched in polar residues.

It belongs to the Nav/unc-53 family.

Its function is as follows. Required for the immune deficiency pathway, which mediates responses to Gram-negative bacterial infection. Favors Rel activation and nuclear translocation. The sequence is that of Protein sickie (sick) from Drosophila melanogaster (Fruit fly).